A 231-amino-acid polypeptide reads, in one-letter code: NADH-ubiquinone oxidoreductase chain 4 (231 aa).

Transmembrane regions (helical) follow at residues 1–21 (PIAGSMVLAAILLKLGGYGII), 34–54 (VFLPFIVLALWGAILANLTCL), 61–80 (SLIAYSSVSHMGLVVAAIII), 84–106 (WGLSGAMALMIAHGFTSSALFCL), 128–148 (ILPMATTWWLLINLMNIATPP), 156–176 (LLIISALFNWCPTTMIMLGLS), and 211–231 (LLMILHIIPLVLISMKPELVI).

Belongs to the complex I subunit 4 family.

The protein localises to the mitochondrion membrane. It catalyses the reaction a ubiquinone + NADH + 5 H(+)(in) = a ubiquinol + NAD(+) + 4 H(+)(out). Core subunit of the mitochondrial membrane respiratory chain NADH dehydrogenase (Complex I) that is believed to belong to the minimal assembly required for catalysis. Complex I functions in the transfer of electrons from NADH to the respiratory chain. The immediate electron acceptor for the enzyme is believed to be ubiquinone. The sequence is that of NADH-ubiquinone oxidoreductase chain 4 (MT-ND4) from Tropidolaemus wagleri (Wagler's pit viper).